The sequence spans 173 residues: Pectinesterase inhibitor 2 (173 aa).

The signal sequence occupies residues 1-25; the sequence is MAAYLTNRVLMSSLMFFVMTGSLNA. An intrachain disulfide couples C34 to C43. N-linked (GlcNAc...) asparagine glycans are attached at residues N39 and N63. Residues C99 and C139 are joined by a disulfide bond.

It belongs to the PMEI family. In terms of assembly, interacts with PPME1. As to expression, highest expression in flowers. Expressed exclusively at the pollen tube tip.

Its subcellular location is the secreted. It is found in the extracellular space. It localises to the apoplast. Functionally, inhibits pectin methylesterase (PME) from flowers, siliques and pollen tube. This is Pectinesterase inhibitor 2 from Arabidopsis thaliana (Mouse-ear cress).